Consider the following 777-residue polypeptide: Spastin (777 aa).

3 stretches are compositionally biased toward low complexity: residues 1 to 24 (MVRT…KSNN), 51 to 76 (HAHS…SSSP), and 85 to 94 (DDLTPTGSSP). A disordered region spans residues 1-103 (MVRTKSSSSS…PRSCNGRGHS (103 aa)). Residues 1 to 116 (MVRTKSSSSS…KQNLYVVSFP (116 aa)) lie on the Cytoplasmic side of the membrane. The required for localization to punctate cytoplasmic foci stretch occupies residues 1–215 (MVRTKSSSSS…RALQPLEMAT (215 aa)). The helical intramembrane region spans 117–137 (IIFLFNVLRSLIYQLFCIFRY). Residues 138–777 (LYGASTKVLY…WSQDYGDITI (640 aa)) are Cytoplasmic-facing. Positions 213-777 (MATNRPGGGY…WSQDYGDITI (565 aa)) are sufficient for interaction with microtubules and microtubule severing. Positions 238–313 (HRRAFEYISK…SMARDRLHFL (76 aa)) constitute an MIT domain. A disordered region spans residues 327–474 (LKEKQPAPKQ…SSGSGASTPM (148 aa)). Composition is skewed to polar residues over residues 372–389 (QNGT…TATG), 406–425 (PVTN…TTVG), and 444–460 (QFSS…RTPI). Residues 461–471 (NNNASSGSGAS) show a composition bias toward low complexity. Residues 462–474 (NNASSGSGASTPM) are required for interaction with microtubules. 542–549 (GPPGNGKT) is an ATP binding site.

This sequence belongs to the AAA ATPase family. Spastin subfamily. In terms of assembly, homohexamer. The homohexamer is stabilized by ATP-binding. The homohexamer may adopt a ring conformation through which microtubules pass prior to being severed. Interacts with microtubules. Interacts with atl; may be involved in microtubule dynamics.

It is found in the membrane. Its subcellular location is the cytoplasm. The protein localises to the cytoskeleton. The protein resides in the microtubule organizing center. It localises to the centrosome. It is found in the chromosome. Its subcellular location is the lipid droplet. It carries out the reaction n ATP + n H2O + a microtubule = n ADP + n phosphate + (n+1) alpha/beta tubulin heterodimers.. Functionally, ATP-dependent microtubule severing protein. Stimulates microtubule minus-end depolymerization and poleward microtubule flux in the mitotic spindle. Regulates microtubule stability in the neuromuscular junction synapse. Involved in lipid metabolism by regulating the size and distribution of lipid droplets. Involved in axon regeneration by regulating microtubule severing. The chain is Spastin from Drosophila willistoni (Fruit fly).